The following is a 4118-amino-acid chain: BEACH domain-containing protein lvsB (4118 aa).

Residues 1–35 are disordered; it reads MNRNFNNINNNNNNNNNYHGYQYHQQQQQQNQQQQ. The chain crosses the membrane as a helical span at residues 198-218; it reads GIPLSFLNFLITILLRILSLP. Positions 236–257 are enriched in low complexity; the sequence is NFSGNNNNNFNNNNHYFNNNHN. Disordered stretches follow at residues 236–267, 332–382, and 621–644; these read NFSG…QHHQ, PLSS…SKNN, and ISSS…KNNN. Positions 258 to 267 are enriched in basic residues; that stretch reads NHNHHYQHHQ. Composition is skewed to low complexity over residues 332-381 and 621-636; these read PLSS…NSKN and ISSS…NSDG. A helical transmembrane segment spans residues 827 to 847; sequence YLVLYMIVTEILSLLLELLVP. The segment covering 1155 to 1170 has biased composition (low complexity); the sequence is NGGSISPSSIINNMNS. 11 disordered regions span residues 1155-1213, 1599-1622, 1643-1681, 1928-1968, 2015-2044, 2537-2574, 2702-2741, 2754-2791, 2902-3007, 3245-3265, and 3348-3418; these read NGGS…FNNN, ANTT…TAVS, NSGI…STNL, GNFL…ISSS, STNN…SNSL, RRGS…NNNE, FSPS…TSDS, DQSN…NGIN, NTNS…NSNE, PLIP…TKDQ, and KTTA…NIVK. Composition is skewed to low complexity over residues 1657–1678 and 1935–1968; these read SIGS…SGSS and SSSN…ISSS. The span at 2540–2571 shows a compositional bias: low complexity; that stretch reads SSSSSTNSTTNNNNNNSSTTTTSNNNNNNNEN. The stretch at 2705-2738 forms a coiled coil; that stretch reads SRSKEKEKEKEKEKEKEKEKEKERERERETTNVT. A compositionally biased stretch (basic and acidic residues) spans 2706–2734; the sequence is RSKEKEKEKEKEKEKEKEKEKERERERET. Composition is skewed to low complexity over residues 2758 to 2791 and 2902 to 2947; these read EESS…NGIN and NTNS…NSTN. Residues 2948-2962 are compositionally biased toward polar residues; the sequence is QTITDTTLSPASSNV. Composition is skewed to low complexity over residues 2963–2980 and 2988–3006; these read SISN…NNNS and SNIN…SNSN. The region spanning 3303-3479 is the BEACH-type PH domain; the sequence is KLGEKVNEVF…DRDIVYDLIM (177 aa). Over residues 3357–3411 the composition is skewed to low complexity; it reads SNNNNNNNNNNNNNNNNNNNNSNDTTSSINSTTATNTNTTNTTTTNTTTTTTTTN. Residues 3491 to 3782 enclose the BEACH domain; the sequence is AEVHGNILKM…QIFTKPHPKK (292 aa). 5 WD repeats span residues 3868–3907, 3924–3963, 3984–4027, 4029–4073, and 4075–4114; these read VLND…GTIM, GHTN…YINS, TFET…LAKQ, FVND…KIRT, and VSKS…GYSS.

It is found in the membrane. The protein localises to the lysosome. The protein resides in the endosome. Involved in negative regulation of lysosome biogenesis, by limiting the heterotypic fusion of early endosomes and postlysosomal compartments. This chain is BEACH domain-containing protein lvsB (lvsB), found in Dictyostelium discoideum (Social amoeba).